The chain runs to 363 residues: Histidine biosynthesis bifunctional protein HisB (363 aa).

The segment at 1–174 is histidinol-phosphatase; sequence MTQPTLFIDR…AVTNIGDRQP (174 aa). The active-site Nucleophile is the D9. Positions 9 and 11 each coordinate Mg(2+). D11 functions as the Proton donor in the catalytic mechanism. Residues C92, H94, C100, and C102 each coordinate Zn(2+). D129 contributes to the Mg(2+) binding site. Residues 175–363 are imidazoleglycerol-phosphate dehydratase; it reads RYAEVVRKTK…NELPSSKGVL (189 aa).

The protein in the N-terminal section; belongs to the histidinol-phosphatase family. This sequence in the C-terminal section; belongs to the imidazoleglycerol-phosphate dehydratase family. The cofactor is Mg(2+). Zn(2+) is required as a cofactor.

Its subcellular location is the cytoplasm. It carries out the reaction D-erythro-1-(imidazol-4-yl)glycerol 3-phosphate = 3-(imidazol-4-yl)-2-oxopropyl phosphate + H2O. The enzyme catalyses L-histidinol phosphate + H2O = L-histidinol + phosphate. The protein operates within amino-acid biosynthesis; L-histidine biosynthesis; L-histidine from 5-phospho-alpha-D-ribose 1-diphosphate: step 6/9. It functions in the pathway amino-acid biosynthesis; L-histidine biosynthesis; L-histidine from 5-phospho-alpha-D-ribose 1-diphosphate: step 8/9. This Actinobacillus pleuropneumoniae serotype 5b (strain L20) protein is Histidine biosynthesis bifunctional protein HisB.